Consider the following 608-residue polypeptide: Bifunctional lycopene cyclase/phytoene synthase (608 aa).

Residues 1–240 (MSILTYLEFH…LVFATCAIDR (240 aa)) are lycopene beta-cyclase. The next 7 membrane-spanning stretches (helical) occupy residues 3–23 (ILTY…ALCW), 37–56 (YKFL…NYIV), 80–97 (YMFF…SNFV), 117–137 (LLVR…AWHL), 150–170 (ILWY…EYIL), 175–195 (AVLL…IVAI), and 218–238 (VEEC…TCAI). Positions 247–608 (LYKSSVQNQN…ARKIKSFFVD (362 aa)) are phytoene synthase.

It in the N-terminal section; belongs to the lycopene beta-cyclase family. The protein in the C-terminal section; belongs to the phytoene/squalene synthase family.

It localises to the membrane. The enzyme catalyses all-trans-lycopene = gamma-carotene. It carries out the reaction gamma-carotene = all-trans-beta-carotene. The catalysed reaction is 2 (2E,6E,10E)-geranylgeranyl diphosphate = 15-cis-phytoene + 2 diphosphate. It functions in the pathway carotenoid biosynthesis; beta-carotene biosynthesis. The protein operates within carotenoid biosynthesis; phytoene biosynthesis; all-trans-phytoene from geranylgeranyl diphosphate: step 1/1. In terms of biological role, bifunctional enzyme that catalyzes the reactions from geranylgeranyl diphosphate to phytoene (phytoene synthase) and lycopene to beta-carotene via the intermediate gamma-carotene (lycopene cyclase). In Blakeslea trispora (Choanephora trispora), this protein is Bifunctional lycopene cyclase/phytoene synthase.